An 893-amino-acid polypeptide reads, in one-letter code: 104 kDa microneme/rhoptry antigen (893 aa).

A signal peptide spans 1–19; that stretch reads MKFLVLLFNILCLFPILGA. 3 disordered regions span residues 492–666, 681–799, and 818–873; these read SKKK…FDPK, KTKE…PTGK, and KEHM…RKPD. 2 stretches are compositionally biased toward basic and acidic residues: residues 525–565 and 573–591; these read SESK…EHKP and KRPE…ESPK. Positions 595–606 are enriched in low complexity; it reads RPVSPQRPVSPK. 3 stretches are compositionally biased toward basic and acidic residues: residues 731–755, 788–797, and 818–830; these read EEVK…DSPT, EAGRILRDPT, and KEHM…KIVV. A compositionally biased stretch (acidic residues) spans 831 to 841; it reads DDDGTEADDED. Positions 851–869 are enriched in basic residues; it reads STVRRRRPRPKKSSKSSKP. A lipid anchor (GPI-anchor amidated aspartate) is attached at aspartate 873. A propeptide spans 874–893 (removed in mature form); it reads SAFVPSIIFIFLVSLIVGIL.

It is found in the cell membrane. This is 104 kDa microneme/rhoptry antigen from Theileria annulata.